Reading from the N-terminus, the 237-residue chain is Probable glutathione-independent glyoxalase HSP32 (237 aa).

Active-site residues include Cys-138, His-139, and Glu-170.

Belongs to the peptidase C56 family. HSP31-like subfamily. Homodimer.

It localises to the cytoplasm. The protein resides in the P-body. The enzyme catalyses methylglyoxal + H2O = (R)-lactate + H(+). Functionally, catalyzes the conversion of methylglyoxal (MG) to D-lactate in a single glutathione (GSH)-independent step. May play a role in detoxifying endogenously produced glyoxals. Involved in protection against reactive oxygen species (ROS). Important for viability in stationary phase. May negatively regulate TORC1 in response to nutrient limitation. This chain is Probable glutathione-independent glyoxalase HSP32, found in Saccharomyces cerevisiae (strain ATCC 204508 / S288c) (Baker's yeast).